Reading from the N-terminus, the 163-residue chain is uncharacterized protein (163 aa).

Residues Ile-7–Ser-162 enclose the N-acetyltransferase domain.

The protein belongs to the acetyltransferase family.

The protein localises to the cytoplasm. The protein resides in the nucleus. This is an uncharacterized protein from Schizosaccharomyces pombe (strain 972 / ATCC 24843) (Fission yeast).